Here is a 411-residue protein sequence, read N- to C-terminus: Probable UDP-arabinose 4-epimerase 3 (411 aa).

Positions 1–13 (MLSFSRARSQGRN) are enriched in polar residues. The tract at residues 1-22 (MLSFSRARSQGRNTRPLGGGME) is disordered. Topologically, residues 1 to 31 (MLSFSRARSQGRNTRPLGGGMEYLEPKRKSN) are cytoplasmic. A helical; Signal-anchor for type II membrane protein transmembrane segment spans residues 32–50 (VMGKIILVVSLTALCIFML). At 51 to 411 (KHAPSFTSPT…KTHPHGYASS (361 aa)) the chain is on the lumenal side. Position 71–102 (71–102 (HVLVTGGAGYIGSHAALRLLKDSYRVTIVDNL)) interacts with NAD(+). Tyr219 (proton acceptor) is an active-site residue.

This sequence belongs to the NAD(P)-dependent epimerase/dehydratase family. Requires NAD(+) as cofactor.

It localises to the golgi apparatus. Its subcellular location is the golgi stack membrane. It catalyses the reaction UDP-beta-L-arabinopyranose = UDP-alpha-D-xylose. The protein operates within nucleotide-sugar biosynthesis; UDP-L-arabinose biosynthesis; UDP-L-arabinose from UDP-alpha-D-xylose: step 1/1. Its pathway is cell wall biogenesis; cell wall polysaccharide biosynthesis. The protein is Probable UDP-arabinose 4-epimerase 3 of Arabidopsis thaliana (Mouse-ear cress).